Consider the following 88-residue polypeptide: MVKLRLKRCGRKQRAVYRIVAIDVRSRREGRDLRKVGFYDPIKNQTYLNVPAILYFLEKGAQPTGTVQDILKKAEVFKELCPNQTKFN.

Belongs to the bacterial ribosomal protein bS16 family.

The protein resides in the plastid. The protein localises to the chloroplast. The protein is Small ribosomal subunit protein bS16c of Lactuca sativa (Garden lettuce).